The chain runs to 1156 residues: MASLLPLLCLCVVAAHLAGARDATPTEEPMATALGLERRSVYTGQPSPALEDWEEASEWTSWFNVDHPGGDGDFESLAAIRFYYGPARVCPRPLALEARTTDWALPSAVGERVHLNPTRGFWCLNREQPRGRRCSNYHVRFRCPLEASWGAWGPWGPCSGSCGPGRRLRRRHCPSPAGDACPGRPLEAQKCVRPRCPGCSLDTCECPDHILLGSVVTPSGQPLLGARVSLRDQPGTVATSDAHGTFRVPGVCADSRANIRAQMDGFSAGEAQAQANGSISVVTIILDKLEKPYLVKHPESRVREAGQNVTFCCKASGTPMPKKYSWFHNGTLLDRRAHGYGAHLELRGLRPDQAGIYHCKAWNEAGAVRSGTARLTVLAPGQPACDPRPREYLIKLPEDCGQPGSGPAYLDVGLCPDTRCPSLAGSSPRCGDASSRCCSVRRLERREIHCPGYVLPVKVVAECGCQKCLPPRGLVRGRVVAADSGEPLRFARILLGQEPIGFTAYQGDFTIEVPPSTQRLVVTFVDPSGEFMDAVRVLPFDPRGAGVYHEVKAMRKKAPVILHTSQSNTIPLGELEDEAPLGELVLPSGAFRRADGKPYSGPVEARVTFVDPRDLTSAASAPSDLRFVDSDGELAPLRTYGMFSVDLRAPGSAEQLQVGPVAVRVAASQIHMPGHVEALKLWSLNPETGLWEEESGFRREGSSGPRVRREERVFLVGNVEIRERRLFNLDVPERRRCFVKVRAYANDKFTPSEQVEGVVVTLVNLEPAPGFSANPRAWGRFDSAVTGPNGACLPAFCDADRPDAYTALVTATLGGEELEPAPSLPRPLPATVGVTQPYLDRLGYRRTDHDDPAFKRNGFRINLAKPRPGDPAEANGPVYPWRSLRECQGAPVTASHFRFARVEADKYEYNVVPFREGTPASWTGDLLAWWPNPQEFRACFLKVKIQGPQEYMVRSHNAGGSHPRTRGQLYGLRDARSVRDPERPGTSAACVEFKCSGMLFDQRQVDRTLVTIMPQGSCRRVAVNGLLRDYLTRHPPPVPAEDPAAFSMLAPLDPLGHNYGVYTVTDQSPRLAKEIAIGRCFDGSSDGFSREMKADAGTAVTFQCREPPAGRPSLFQRLLESPATALGDIRREMSEAAQAQARASGPLRTRRGRVRQ.

The N-terminal stretch at Met-1 to Ala-20 is a signal peptide. Residues Glu-146 to Pro-197 enclose the TSP type-1 domain. 3 cysteine pairs are disulfide-bonded: Cys-158/Cys-191, Cys-162/Cys-196, and Cys-173/Cys-181. 3 N-linked (GlcNAc...) asparagine glycosylation sites follow: Asn-276, Asn-308, and Asn-329. Residues Pro-292–Thr-376 form the Ig-like C2-type domain. An intrachain disulfide couples Cys-313 to Cys-359. The tract at residues Ser-1134–Gln-1156 is disordered.

May be cleaved into 2 chains possibly by a furin-like protease upon or preceding secretion. As to expression, expressed in articular chondrocytes but not in knee meniscal cartilage cells. Localizes to the intermediate to deep zone of articular cartilage.

The protein resides in the secreted. The protein localises to the extracellular space. It localises to the extracellular matrix. May play a role in cartilage scaffolding. The polypeptide is Cartilage intermediate layer protein 2 (CILP2) (Homo sapiens (Human)).